An 836-amino-acid polypeptide reads, in one-letter code: RNA-binding protein 12B-A (836 aa).

Residues 154–229 enclose the RRM 1 domain; sequence PYLFLRGLPY…RFIEVMQGSE (76 aa). Positions 237-277 are disordered; that stretch reads GTATEGGDTPRMRSEEHSPSRRINGRHFRKRSHSKSPRARS. The span at 244–255 shows a compositional bias: basic and acidic residues; sequence DTPRMRSEEHSP. Basic residues predominate over residues 259–277; the sequence is INGRHFRKRSHSKSPRARS. 2 RRM domains span residues 283-359 and 401-478; these read FYVH…PVSR and LCIY…LISE. 2 disordered regions span residues 539–572 and 620–644; these read GHFK…PWEE and SQEH…RRSR. Positions 550-572 are enriched in basic and acidic residues; the sequence is QSDRRSPEDFRHSPEDYRHPWEE. Position 703 is a phosphoserine (Ser703). Position 758 is an N6-acetyllysine (Lys758). The 77-residue stretch at 760-836 folds into the RRM 4 domain; it reads IPVKISNLPF…GPRKVKLSLL (77 aa).

The polypeptide is RNA-binding protein 12B-A (Rbm12b1) (Mus musculus (Mouse)).